Here is a 574-residue protein sequence, read N- to C-terminus: Proline--tRNA ligase (574 aa).

Belongs to the class-II aminoacyl-tRNA synthetase family. ProS type 1 subfamily. In terms of assembly, homodimer.

The protein resides in the cytoplasm. The enzyme catalyses tRNA(Pro) + L-proline + ATP = L-prolyl-tRNA(Pro) + AMP + diphosphate. Functionally, catalyzes the attachment of proline to tRNA(Pro) in a two-step reaction: proline is first activated by ATP to form Pro-AMP and then transferred to the acceptor end of tRNA(Pro). As ProRS can inadvertently accommodate and process non-cognate amino acids such as alanine and cysteine, to avoid such errors it has two additional distinct editing activities against alanine. One activity is designated as 'pretransfer' editing and involves the tRNA(Pro)-independent hydrolysis of activated Ala-AMP. The other activity is designated 'posttransfer' editing and involves deacylation of mischarged Ala-tRNA(Pro). The misacylated Cys-tRNA(Pro) is not edited by ProRS. The polypeptide is Proline--tRNA ligase (Ralstonia nicotianae (strain ATCC BAA-1114 / GMI1000) (Ralstonia solanacearum)).